Consider the following 1068-residue polypeptide: Huntingtin-interacting protein 1-related protein (1068 aa).

Position 1 is an N-acetylmethionine (methionine 1). Residues 23 to 151 enclose the ENTH domain; that stretch reads EREQFDKTQA…SFHLKHPQFP (129 aa). Residues 346-644 adopt a coiled-coil conformation; sequence GSMKDDRDLQ…LQDAVSKLDD (299 aa). The disordered stretch occupies residues 582–610; that stretch reads EALSQEQQRSSQEKGELRGQLAEKESQEQ. The segment covering 592 to 608 has biased composition (basic and acidic residues); the sequence is SQEKGELRGQLAEKESQ. In terms of domain architecture, I/LWEQ spans 771-1012; it reads SLDVRQEELG…ELRKQHYVLA (242 aa). Residues 867–924 are important for actin binding; the sequence is RWTEGLISASKAVGWGATQLVESADKVVLHMGKYEELIVCSHEIAASTAQLVAASKVK. Residues 1011 to 1068 are disordered; the sequence is LAGGMGTPSEEEPSRPSPAPRSGATKKPPLAQKPSIAPRTDNQLDKKDGVYPAQLVNY.

Belongs to the SLA2 family. Homodimer. Interacts with actin; homodimerization promotes actin binding. Interacts with CLTB. Interacts with HIP1. Interacts (via ENTH and I/LWEQ domains) with BCL2L10. As to expression, widely expressed. Expressed at lower levels in skeletal muscle and heart. The level of expression does not change appreciably during development.

The protein resides in the cytoplasm. Its subcellular location is the perinuclear region. The protein localises to the endomembrane system. It localises to the cytoplasmic vesicle. It is found in the clathrin-coated vesicle membrane. Component of clathrin-coated pits and vesicles, that may link the endocytic machinery to the actin cytoskeleton. Binds 3-phosphoinositides (via ENTH domain). May act through the ENTH domain to promote cell survival by stabilizing receptor tyrosine kinases following ligand-induced endocytosis. The sequence is that of Huntingtin-interacting protein 1-related protein (Hip1r) from Mus musculus (Mouse).